The primary structure comprises 159 residues: Phosphoribosylaminoimidazole carboxylase (159 aa).

Substrate contacts are provided by serine 11, aspartate 14, serine 38, lysine 41, glycine 67, and serine 69.

The catalysed reaction is 5-amino-1-(5-phospho-D-ribosyl)imidazole-4-carboxylate + H(+) = 5-amino-1-(5-phospho-beta-D-ribosyl)imidazole + CO2. It functions in the pathway purine metabolism; IMP biosynthesis via de novo pathway; 5-amino-1-(5-phospho-D-ribosyl)imidazole-4-carboxylate from 5-amino-1-(5-phospho-D-ribosyl)imidazole (carboxylase route): step 1/1. Functionally, catalyzes the reversible conversion of 5-aminoimidazole ribonucleotide (AIR) and CO(2) to 4-carboxy-5-aminoimidazole ribonucleotide (CAIR). Does not accept N5-carboxyaminoimidazole ribonucleotide (N5-CAIR) as a substrate. This chain is Phosphoribosylaminoimidazole carboxylase, found in Treponema denticola (strain ATCC 35405 / DSM 14222 / CIP 103919 / JCM 8153 / KCTC 15104).